We begin with the raw amino-acid sequence, 306 residues long: D-alanine--D-alanine ligase (306 aa).

Residues 105–300 (KMIWQAAGIS…FDELVIQILE (196 aa)) form the ATP-grasp domain. 131–186 (TDRLGLPLIIKPAREGSTIGLNKVDYAQDMQSAYQTAAQHDSLVIAEQFIQGIELT) is a binding site for ATP. Mg(2+) contacts are provided by Asp-254, Glu-267, and Asn-269.

The protein belongs to the D-alanine--D-alanine ligase family. The cofactor is Mg(2+). Requires Mn(2+) as cofactor.

It is found in the cytoplasm. It catalyses the reaction 2 D-alanine + ATP = D-alanyl-D-alanine + ADP + phosphate + H(+). The protein operates within cell wall biogenesis; peptidoglycan biosynthesis. Functionally, cell wall formation. This is D-alanine--D-alanine ligase from Nitrosomonas eutropha (strain DSM 101675 / C91 / Nm57).